The primary structure comprises 782 residues: Protein PAT1 homolog 1 (782 aa).

4 disordered regions span residues 96 to 153, 177 to 217, 332 to 372, and 460 to 481; these read GPKH…HSKP, LPES…YSAP, VREH…SKHM, and EVDS…GKHL. Over residues 108 to 117 the composition is skewed to low complexity; sequence SGSFSRESSS. The span at 208 to 217 shows a compositional bias: polar residues; it reads GGSQLTYSAP. Residues 335-347 show a composition bias toward basic residues; the sequence is HKHKSSHRSRKNR. Over residues 348-366 the composition is skewed to polar residues; sequence GLSQQTSDAASQKSETGLQ. Basic and acidic residues predominate over residues 471-481; the sequence is SGDHKGSGKHL.

Interacts with AFPH2/NINJA. As to expression, expressed in root vasculature, shoot apical meristem (SAM) and leaves.

Activator of mRNA decapping. Involved in mRNA decay via decapping. Involved in the regulation of root stem cell niche identity. Maintains root stem cell niche stability through the interaction with the negative regulator of jasmonate signaling AFPH2/NINJA, and the regulation of cell division. The protein is Protein PAT1 homolog 1 of Arabidopsis thaliana (Mouse-ear cress).